We begin with the raw amino-acid sequence, 486 residues long: Ribulose bisphosphate carboxylase large chain (486 aa).

2 residues coordinate substrate: N126 and T176. Residue K178 is the Proton acceptor of the active site. Substrate is bound at residue K180. 3 residues coordinate Mg(2+): K204, D206, and E207. Position 204 is an N6-carboxylysine (K204). H296 serves as the catalytic Proton acceptor. 3 residues coordinate substrate: R297, H329, and S381.

Belongs to the RuBisCO large chain family. Type I subfamily. As to quaternary structure, heterohexadecamer of 8 large chains and 8 small chains. Requires Mg(2+) as cofactor.

The enzyme catalyses 2 (2R)-3-phosphoglycerate + 2 H(+) = D-ribulose 1,5-bisphosphate + CO2 + H2O. It carries out the reaction D-ribulose 1,5-bisphosphate + O2 = 2-phosphoglycolate + (2R)-3-phosphoglycerate + 2 H(+). RuBisCO catalyzes two reactions: the carboxylation of D-ribulose 1,5-bisphosphate, the primary event in carbon dioxide fixation, as well as the oxidative fragmentation of the pentose substrate. Both reactions occur simultaneously and in competition at the same active site. The polypeptide is Ribulose bisphosphate carboxylase large chain (Cupriavidus taiwanensis (strain DSM 17343 / BCRC 17206 / CCUG 44338 / CIP 107171 / LMG 19424 / R1) (Ralstonia taiwanensis (strain LMG 19424))).